We begin with the raw amino-acid sequence, 234 residues long: Adenosine 5'-phosphosulfate reductase (234 aa).

Positions 120, 121, 203, and 206 each coordinate [4Fe-4S] cluster. The active-site Nucleophile; cysteine thiosulfonate intermediate is cysteine 229.

The protein belongs to the PAPS reductase family. CysH subfamily. Requires [4Fe-4S] cluster as cofactor.

The protein resides in the cytoplasm. It carries out the reaction [thioredoxin]-disulfide + sulfite + AMP + 2 H(+) = adenosine 5'-phosphosulfate + [thioredoxin]-dithiol. Its pathway is sulfur metabolism; hydrogen sulfide biosynthesis; sulfite from sulfate. Its function is as follows. Catalyzes the formation of sulfite from adenosine 5'-phosphosulfate (APS) using thioredoxin as an electron donor. The protein is Adenosine 5'-phosphosulfate reductase of Bacillus thuringiensis (strain Al Hakam).